A 233-amino-acid polypeptide reads, in one-letter code: DNA repair protein RecO (233 aa).

This sequence belongs to the RecO family.

Involved in DNA repair and RecF pathway recombination. This is DNA repair protein RecO from Pseudomonas aeruginosa (strain LESB58).